The sequence spans 459 residues: U-box domain-containing protein 75 (459 aa).

The 75-residue stretch at 64-138 (AVPAVFICPI…AAWFSRRYTR (75 aa)) folds into the U-box domain. ARM repeat units follow at residues 188–229 (QSVT…GVPL) and 231–270 (ADAK…ILME).

As to quaternary structure, interacts with GPA1. Expressed highly in panicles at flowering time, at moderate levels in vegetative shoot apices, leaf sheaths, leaf blades, and elongating internodes, and at low levels in roots.

The protein resides in the cell membrane. The catalysed reaction is S-ubiquitinyl-[E2 ubiquitin-conjugating enzyme]-L-cysteine + [acceptor protein]-L-lysine = [E2 ubiquitin-conjugating enzyme]-L-cysteine + N(6)-ubiquitinyl-[acceptor protein]-L-lysine.. Its pathway is protein modification; protein ubiquitination. E3 ubiquitin ligase that may function as positive regulator of brassinosteroid (BR) signaling. Possesses E3 ubiquitin ligase in vitro. Acts together with the heterotrimeric G alpha subunit GPA1 at the plasma membrane to mediate a BR signaling pathway that affects plant growth and development. Does not seem to be involved in gibberellin or cytokinin responses. In Oryza sativa subsp. japonica (Rice), this protein is U-box domain-containing protein 75.